A 541-amino-acid chain; its full sequence is Reticulophagy regulator 2 (541 aa).

Helical transmembrane passes span 75 to 91 (LHSL…FWLL), 99 to 115 (FFLL…LDLW), and 199 to 219 (VPGI…PLVV). The disordered stretch occupies residues 249-282 (LHHKHDKRKRQGKNAPPAGDEPLAETESESEAEL). A compositionally biased stretch (basic residues) spans 250-260 (HHKHDKRKRQG). Positions 270 to 280 (PLAETESESEA) are enriched in acidic residues. Position 274 is a phosphothreonine (Thr274). Residues Ser276, Ser278, Ser286, and Ser306 each carry the phosphoserine modification. Thr329 carries the post-translational modification Phosphothreonine. 3 disordered regions span residues 331 to 389 (VSED…ADKE), 403 to 440 (THFN…APSS), and 459 to 481 (PSVL…EEEA). Phosphoserine occurs at positions 332, 339, and 342. A compositionally biased stretch (low complexity) spans 459 to 475 (PSVLPSLPQDSPQALTA). An LIR motif motif is present at residues 485–490 (EDFELL). The tract at residues 496 to 541 (EQLNAELGLGPEMPPKPPDVLPPPPLGPDSHSLVQSDQEAHAVVEP) is disordered. Residues 507-522 (EMPPKPPDVLPPPPLG) show a composition bias toward pro residues.

Belongs to the RETREG family. Interacts with ATG8 family modifier proteins MAP1LC3A, MAP1LC3B, GABARAP, GABARAPL1 and GABARAPL2. Interacts with CANX.

It localises to the endoplasmic reticulum membrane. In terms of biological role, endoplasmic reticulum (ER)-anchored autophagy regulator which exists in an inactive state under basal conditions but is activated following cellular stress. When activated, induces ER fragmentation and mediates ER delivery into lysosomes through sequestration into autophagosomes via interaction with ATG8 family proteins. Required for collagen quality control in a LIR motif-independent manner. This is Reticulophagy regulator 2 (Retreg2) from Rattus norvegicus (Rat).